The primary structure comprises 72 residues: UPF0150 protein jhp_0960 (72 aa).

The protein belongs to the UPF0150 family.

This is UPF0150 protein jhp_0960 from Helicobacter pylori (strain J99 / ATCC 700824) (Campylobacter pylori J99).